We begin with the raw amino-acid sequence, 332 residues long: L-lactate dehydrogenase A chain (332 aa).

Lys-5 carries the post-translational modification N6-acetyllysine; alternate. Lys-5 carries the post-translational modification N6-succinyllysine; alternate. Lys-14 is subject to N6-acetyllysine. Thr-18 carries the phosphothreonine modification. 29 to 57 is a binding site for NAD(+); that stretch reads GAVGMACAISILMKDLADELALVDVIEDK. At Lys-57 the chain carries N6-acetyllysine; alternate. Lys-57 participates in a covalent cross-link: Glycyl lysine isopeptide (Lys-Gly) (interchain with G-Cter in SUMO2); alternate. Lys-81 carries the N6-acetyllysine modification. Residue Arg-99 participates in NAD(+) binding. Arg-106 is a substrate binding site. Lys-118 is subject to N6-acetyllysine; alternate. An N6-succinyllysine; alternate modification is found at Lys-118. Lys-126 bears the N6-acetyllysine mark. Asn-138 contacts NAD(+). Substrate is bound by residues Asn-138 and Arg-169. His-193 acts as the Proton acceptor in catalysis. Residue Lys-232 is modified to N6-acetyllysine. At Tyr-239 the chain carries Phosphotyrosine. At Lys-243 the chain carries N6-acetyllysine. Thr-248 is a binding site for substrate. Phosphothreonine is present on residues Thr-309 and Thr-322.

It belongs to the LDH/MDH superfamily. LDH family. As to quaternary structure, homotetramer. Interacts with PTEN upstream reading frame protein MP31. Post-translationally, ISGylated.

It localises to the cytoplasm. The catalysed reaction is (S)-lactate + NAD(+) = pyruvate + NADH + H(+). It participates in fermentation; pyruvate fermentation to lactate; (S)-lactate from pyruvate: step 1/1. Its function is as follows. Interconverts simultaneously and stereospecifically pyruvate and lactate with concomitant interconversion of NADH and NAD(+). The chain is L-lactate dehydrogenase A chain (LDHA) from Monodelphis domestica (Gray short-tailed opossum).